Consider the following 54-residue polypeptide: MLNKRGVPCRCESDGPPRQNNALSGTTFYVVGCNKAGWNKCRYINAISTCCKEG.

The signal sequence occupies residues 1–7 (MLNKRGV). Cystine bridges form between C9-C50, C11-C41, and C33-C51. The residue at position 53 (E53) is a Glutamic acid 1-amide.

This sequence belongs to the sea anemone sodium channel inhibitory toxin family. Type I subfamily. In terms of processing, contains 3 disulfide bonds.

The protein resides in the secreted. Its subcellular location is the nematocyst. In vivo, induces marked paralysis on shrimps (C.multidentata) at 10-20 seconds after injection and a weak toxicity when injected into insect larvae (M.domestica). The chain is Toxin AnmTx Cj 1c-1 from Epiactis japonica (Sea anemone).